Consider the following 373-residue polypeptide: Putative ribosome biogenesis protein C8F11.04 (373 aa).

The segment at 265–373 (RKVVTKETAS…VKAGKNKVKH (109 aa)) is disordered. Positions 292 to 320 (KVEVAKESKDSKQQNVSDKKQVTVKEVPK) are enriched in basic and acidic residues. Residues 347 to 359 (KVSQSSLKANGTT) are compositionally biased toward polar residues. Positions 362–373 (KKVKAGKNKVKH) are enriched in basic residues.

Belongs to the universal ribosomal protein uL1 family. Highly divergent. Component of the 90S pre-ribosomes.

It is found in the nucleus. The protein resides in the nucleolus. In terms of biological role, involved in rRNA-processing and ribosome biosynthesis. This chain is Putative ribosome biogenesis protein C8F11.04, found in Schizosaccharomyces pombe (strain 972 / ATCC 24843) (Fission yeast).